Consider the following 573-residue polypeptide: DNA ligase (573 aa).

Residue Glu-250 coordinates ATP. The active-site N6-AMP-lysine intermediate is Lys-252. Arg-257, Arg-272, Glu-301, Phe-342, Arg-432, and Lys-438 together coordinate ATP.

The protein belongs to the ATP-dependent DNA ligase family. Requires Mg(2+) as cofactor.

The enzyme catalyses ATP + (deoxyribonucleotide)n-3'-hydroxyl + 5'-phospho-(deoxyribonucleotide)m = (deoxyribonucleotide)n+m + AMP + diphosphate.. Functionally, DNA ligase that seals nicks in double-stranded DNA during DNA replication, DNA recombination and DNA repair. This chain is DNA ligase, found in Methanococcus maripaludis (strain C6 / ATCC BAA-1332).